A 1406-amino-acid polypeptide reads, in one-letter code: DNA-directed RNA polymerase subunit beta' (1406 aa).

The Zn(2+) site is built by C70, C72, C85, and C88. Mg(2+) contacts are provided by D460, D462, and D464. Zn(2+)-binding residues include C814, C888, C895, and C898.

It belongs to the RNA polymerase beta' chain family. The RNAP catalytic core consists of 2 alpha, 1 beta, 1 beta' and 1 omega subunit. When a sigma factor is associated with the core the holoenzyme is formed, which can initiate transcription. It depends on Mg(2+) as a cofactor. Zn(2+) serves as cofactor.

The enzyme catalyses RNA(n) + a ribonucleoside 5'-triphosphate = RNA(n+1) + diphosphate. DNA-dependent RNA polymerase catalyzes the transcription of DNA into RNA using the four ribonucleoside triphosphates as substrates. In Yersinia enterocolitica serotype O:8 / biotype 1B (strain NCTC 13174 / 8081), this protein is DNA-directed RNA polymerase subunit beta'.